A 670-amino-acid polypeptide reads, in one-letter code: DNA ligase (670 aa).

NAD(+) is bound by residues 32 to 36 (DSEYD), 81 to 82 (SL), and E114. K116 (N6-AMP-lysine intermediate) is an active-site residue. NAD(+) contacts are provided by R137, E174, K291, and K315. Zn(2+) is bound by residues C409, C412, C427, and C433. Residues 592-670 (ASENLFKDKT…EEEFLAQITR (79 aa)) form the BRCT domain.

The protein belongs to the NAD-dependent DNA ligase family. LigA subfamily. It depends on Mg(2+) as a cofactor. The cofactor is Mn(2+).

The enzyme catalyses NAD(+) + (deoxyribonucleotide)n-3'-hydroxyl + 5'-phospho-(deoxyribonucleotide)m = (deoxyribonucleotide)n+m + AMP + beta-nicotinamide D-nucleotide.. Functionally, DNA ligase that catalyzes the formation of phosphodiester linkages between 5'-phosphoryl and 3'-hydroxyl groups in double-stranded DNA using NAD as a coenzyme and as the energy source for the reaction. It is essential for DNA replication and repair of damaged DNA. The polypeptide is DNA ligase (Haemophilus influenzae (strain PittEE)).